The sequence spans 119 residues: Ribonuclease P protein component (119 aa).

The segment at 1 to 20 (MLPAQHRMTRSTEFGATVSK) is disordered.

The protein belongs to the RnpA family. Consists of a catalytic RNA component (M1 or rnpB) and a protein subunit.

It catalyses the reaction Endonucleolytic cleavage of RNA, removing 5'-extranucleotides from tRNA precursor.. In terms of biological role, RNaseP catalyzes the removal of the 5'-leader sequence from pre-tRNA to produce the mature 5'-terminus. It can also cleave other RNA substrates such as 4.5S RNA. The protein component plays an auxiliary but essential role in vivo by binding to the 5'-leader sequence and broadening the substrate specificity of the ribozyme. The chain is Ribonuclease P protein component from Mycolicibacterium vanbaalenii (strain DSM 7251 / JCM 13017 / BCRC 16820 / KCTC 9966 / NRRL B-24157 / PYR-1) (Mycobacterium vanbaalenii).